Reading from the N-terminus, the 434-residue chain is MLKIYNSLSNKIEEFKPIHEKKVNMYVCGPTVYDDIHIGNGRPVVFFDVVKRYLQYLDYGVKYASNITDVDDKIIDRAQKLHITEKELATTYTNNFFEIAKKIGGYNFDVTPHATNYIEEMIKFIGELISDGFAYKTQSGVYFRVDKIKDYGILSNQQVKDLKTGVRIDLETDKEKDYDFALWKNTEEGIKYHAPWGDGRPGWHTECVVMTNEIFGGEIDIHGGGFDLKFPHHENEIAQSVAKHDHHLAKYWMHVGRLDLANEKMSKSLGNDIKLKDLVQVYNPNAYRLMLLAHHYRAPIQFSDDLIEQYQKAYDKISYTLNKWHFHMILNNINENGLDHESMEYFEGFMNDDFATPRVISLIDKLIKDLNKAFKVENYNTIIQILSTLGINPNILEVLEDDIQNYNNWQQARLEKNYEKADIYRKPLLDKGFI.

Position 28 (Cys-28) interacts with Zn(2+). The 'HIGH' region motif lies at 30–40; sequence PTVYDDIHIGN. Zn(2+) contacts are provided by Cys-207, His-232, and Glu-236. The 'KMSKS' region motif lies at 264–268; it reads KMSKS. Lys-267 is an ATP binding site.

This sequence belongs to the class-I aminoacyl-tRNA synthetase family. As to quaternary structure, monomer. Zn(2+) is required as a cofactor.

It localises to the cytoplasm. It catalyses the reaction tRNA(Cys) + L-cysteine + ATP = L-cysteinyl-tRNA(Cys) + AMP + diphosphate. The protein is Cysteine--tRNA ligase of Acholeplasma laidlawii (strain PG-8A).